A 263-amino-acid chain; its full sequence is GTP cyclohydrolase 1 type 2 homolog (263 aa).

A divalent metal cation-binding residues include H76, H77, D113, H231, and E235.

This sequence belongs to the GTP cyclohydrolase I type 2/NIF3 family. As to quaternary structure, homohexamer.

The protein is GTP cyclohydrolase 1 type 2 homolog of Deinococcus radiodurans (strain ATCC 13939 / DSM 20539 / JCM 16871 / CCUG 27074 / LMG 4051 / NBRC 15346 / NCIMB 9279 / VKM B-1422 / R1).